The following is a 181-amino-acid chain: CASP-like protein 1F2 (181 aa).

At 1 to 18 the chain is on the cytoplasmic side; sequence MADIETKSSQNQPLKTQN. Residues 19 to 39 traverse the membrane as a helical segment; that stretch reads IFIGAQIFLRIVVIAASFAST. Residues 40 to 70 lie on the Extracellular side of the membrane; sequence WLMLTNKQTIDIGGFVLDANYSYSPEFKFLS. Residue Asn59 is glycosylated (N-linked (GlcNAc...) asparagine). A helical membrane pass occupies residues 71–91; the sequence is YANIVVGAFSFVSLLFLVLVG. The Cytoplasmic portion of the chain corresponds to 92–100; it reads RRSSNPTYY. Residues 101–121 form a helical membrane-spanning segment; that stretch reads FILFLHDLALMSLVLGGCAAA. Residues 122–150 lie on the Extracellular side of the membrane; the sequence is TVIGSLGKYGNSHTGWMQICDHFGKFCKR. Residues 151–171 traverse the membrane as a helical segment; it reads ATTSVAFSYFSLVCLLILTIT. The Cytoplasmic portion of the chain corresponds to 172 to 181; the sequence is SASKSRQIQV.

Belongs to the Casparian strip membrane proteins (CASP) family. As to quaternary structure, homodimer and heterodimers.

The protein localises to the cell membrane. The protein is CASP-like protein 1F2 of Populus trichocarpa (Western balsam poplar).